The sequence spans 341 residues: DNA-directed RNA polymerase subunit alpha (341 aa).

The segment at 1–233 is alpha N-terminal domain (alpha-NTD); the sequence is MIRDEIPISA…NLFIPFLHAE (233 aa). Positions 265-341 are alpha C-terminal domain (alpha-CTD); sequence TKGVTFKHIF…NLPKNKLHFH (77 aa).

It belongs to the RNA polymerase alpha chain family. As to quaternary structure, in plastids the minimal PEP RNA polymerase catalytic core is composed of four subunits: alpha, beta, beta', and beta''. When a (nuclear-encoded) sigma factor is associated with the core the holoenzyme is formed, which can initiate transcription.

The protein resides in the plastid. It localises to the chloroplast. The catalysed reaction is RNA(n) + a ribonucleoside 5'-triphosphate = RNA(n+1) + diphosphate. Its function is as follows. DNA-dependent RNA polymerase catalyzes the transcription of DNA into RNA using the four ribonucleoside triphosphates as substrates. The chain is DNA-directed RNA polymerase subunit alpha from Takakia lepidozioides (Moss).